The following is a 339-amino-acid chain: Ketol-acid reductoisomerase (NADP(+)) (339 aa).

A KARI N-terminal Rossmann domain is found at 1–182 (MRVYYDRDAD…GGGRSGIIET (182 aa)). NADP(+)-binding positions include 24-27 (YGSQ), arginine 48, serine 51, threonine 53, and 83-86 (DEHQ). Residue histidine 108 is part of the active site. Glycine 134 is a binding site for NADP(+). Residues 183 to 328 (NFREECETDL…ARLRGMMPWI (146 aa)) form the KARI C-terminal knotted domain. Aspartate 191, glutamate 195, glutamate 227, and glutamate 231 together coordinate Mg(2+). Serine 252 provides a ligand contact to substrate.

This sequence belongs to the ketol-acid reductoisomerase family. The cofactor is Mg(2+).

The catalysed reaction is (2R)-2,3-dihydroxy-3-methylbutanoate + NADP(+) = (2S)-2-acetolactate + NADPH + H(+). It carries out the reaction (2R,3R)-2,3-dihydroxy-3-methylpentanoate + NADP(+) = (S)-2-ethyl-2-hydroxy-3-oxobutanoate + NADPH + H(+). It functions in the pathway amino-acid biosynthesis; L-isoleucine biosynthesis; L-isoleucine from 2-oxobutanoate: step 2/4. Its pathway is amino-acid biosynthesis; L-valine biosynthesis; L-valine from pyruvate: step 2/4. In terms of biological role, involved in the biosynthesis of branched-chain amino acids (BCAA). Catalyzes an alkyl-migration followed by a ketol-acid reduction of (S)-2-acetolactate (S2AL) to yield (R)-2,3-dihydroxy-isovalerate. In the isomerase reaction, S2AL is rearranged via a Mg-dependent methyl migration to produce 3-hydroxy-3-methyl-2-ketobutyrate (HMKB). In the reductase reaction, this 2-ketoacid undergoes a metal-dependent reduction by NADPH to yield (R)-2,3-dihydroxy-isovalerate. The protein is Ketol-acid reductoisomerase (NADP(+)) of Caulobacter vibrioides (strain ATCC 19089 / CIP 103742 / CB 15) (Caulobacter crescentus).